Consider the following 296-residue polypeptide: Ribosomal protein L11 methyltransferase (296 aa).

Threonine 139, glycine 163, aspartate 185, and asparagine 232 together coordinate S-adenosyl-L-methionine.

Belongs to the methyltransferase superfamily. PrmA family.

It is found in the cytoplasm. The catalysed reaction is L-lysyl-[protein] + 3 S-adenosyl-L-methionine = N(6),N(6),N(6)-trimethyl-L-lysyl-[protein] + 3 S-adenosyl-L-homocysteine + 3 H(+). In terms of biological role, methylates ribosomal protein L11. The sequence is that of Ribosomal protein L11 methyltransferase from Rippkaea orientalis (strain PCC 8801 / RF-1) (Cyanothece sp. (strain PCC 8801)).